The following is a 421-amino-acid chain: Voltage-dependent calcium channel gamma-8 subunit (421 aa).

Helical transmembrane passes span 19–39 (VQVL…TIAI), 127–147 (SSIF…CVAA), 157–177 (IILG…IGVI), and 207–227 (FGGL…NIYI). A phosphoserine mark is found at Ser251 and Ser254. The interval 271-304 (RRSRSSSRGSSEASPSRDASPGGPGGPGFASTDI) is disordered. The span at 276-287 (SSRGSSEASPSR) shows a compositional bias: low complexity. Residues 318–338 (VAAGLASAGGGGGGAGVGAYG) traverse the membrane as a helical segment. Disordered regions lie at residues 342 to 363 (GAAG…GFLT) and 378 to 421 (VTVT…TTPV). Pro residues predominate over residues 384 to 397 (PAAPAPAPPAPAAP). The segment covering 408-421 (ASNTNTLNRKTTPV) has biased composition (polar residues).

Belongs to the PMP-22/EMP/MP20 family. CACNG subfamily. Interacts with CACNA1C. Identified in a complex with the L-type calcium channel subunits CACNA1C, CACNA2D1 and either CACNB1 or CACNB2. Acts as an auxiliary subunit for AMPA-selective glutamate receptors (AMPARs). Found in a complex with GRIA1, GRIA2, GRIA3, GRIA4, CNIH2, CNIH3, CACNG2, CACNG3, CACNG4, CACNG5 and CACNG7. Interacts with CNIH2. Found in a complex with GRIA1, GRIA2, GRIA3, GRIA4, DLG4 and CNIH2. In terms of processing, palmitoylated. Probably palmitoylated by ZDHHC3 and ZDHHC7.

It is found in the cell membrane. Its subcellular location is the postsynaptic density membrane. In terms of biological role, regulates the activity of L-type calcium channels that contain CACNA1C as pore-forming subunit. Regulates the trafficking and gating properties of AMPA-selective glutamate receptors (AMPARs). Promotes their targeting to the cell membrane and synapses and modulates their gating properties by slowing their rates of activation, deactivation and desensitization and by mediating their resensitization. Does not show subunit-specific AMPA receptor regulation and regulates all AMPAR subunits. Thought to stabilize the calcium channel in an inactivated (closed) state. The polypeptide is Voltage-dependent calcium channel gamma-8 subunit (Rattus norvegicus (Rat)).